The primary structure comprises 521 residues: Cytochrome P450 52A9 (521 aa).

Cysteine 468 contacts heme.

Belongs to the cytochrome P450 family. The cofactor is heme.

The protein localises to the membrane. Together with an NADPH cytochrome P450 the enzyme system catalyzes the terminal hydroxylation as the first step in the assimilation of alkanes and fatty acids. In Candida maltosa (Yeast), this protein is Cytochrome P450 52A9 (CYP52A9).